We begin with the raw amino-acid sequence, 288 residues long: Homoserine kinase (288 aa).

Residue 78 to 88 (PLARGLGSSSS) participates in ATP binding.

The protein belongs to the GHMP kinase family. Homoserine kinase subfamily.

It is found in the cytoplasm. The enzyme catalyses L-homoserine + ATP = O-phospho-L-homoserine + ADP + H(+). The protein operates within amino-acid biosynthesis; L-threonine biosynthesis; L-threonine from L-aspartate: step 4/5. Catalyzes the ATP-dependent phosphorylation of L-homoserine to L-homoserine phosphate. In Streptococcus agalactiae serotype V (strain ATCC BAA-611 / 2603 V/R), this protein is Homoserine kinase.